The following is a 388-amino-acid chain: Chorismate synthase (388 aa).

The NADP(+) site is built by R39 and R45. FMN-binding positions include 132-134, 251-252, G296, 311-315, and R337; these read RSS, NA, and KPIPT.

The protein belongs to the chorismate synthase family. In terms of assembly, homotetramer. Requires FMNH2 as cofactor.

The enzyme catalyses 5-O-(1-carboxyvinyl)-3-phosphoshikimate = chorismate + phosphate. Its pathway is metabolic intermediate biosynthesis; chorismate biosynthesis; chorismate from D-erythrose 4-phosphate and phosphoenolpyruvate: step 7/7. Functionally, catalyzes the anti-1,4-elimination of the C-3 phosphate and the C-6 proR hydrogen from 5-enolpyruvylshikimate-3-phosphate (EPSP) to yield chorismate, which is the branch point compound that serves as the starting substrate for the three terminal pathways of aromatic amino acid biosynthesis. This reaction introduces a second double bond into the aromatic ring system. In Staphylococcus aureus (strain MRSA252), this protein is Chorismate synthase.